We begin with the raw amino-acid sequence, 431 residues long: Serine hydroxymethyltransferase 1 (431 aa).

(6S)-5,6,7,8-tetrahydrofolate contacts are provided by residues leucine 127 and 131–133 (GHL). Lysine 236 is modified (N6-(pyridoxal phosphate)lysine). Glutamate 252 provides a ligand contact to (6S)-5,6,7,8-tetrahydrofolate.

The protein belongs to the SHMT family. As to quaternary structure, homodimer. Pyridoxal 5'-phosphate is required as a cofactor.

The protein resides in the cytoplasm. It carries out the reaction (6R)-5,10-methylene-5,6,7,8-tetrahydrofolate + glycine + H2O = (6S)-5,6,7,8-tetrahydrofolate + L-serine. It functions in the pathway one-carbon metabolism; tetrahydrofolate interconversion. Its pathway is amino-acid biosynthesis; glycine biosynthesis; glycine from L-serine: step 1/1. Its function is as follows. Catalyzes the reversible interconversion of serine and glycine with tetrahydrofolate (THF) serving as the one-carbon carrier. This reaction serves as the major source of one-carbon groups required for the biosynthesis of purines, thymidylate, methionine, and other important biomolecules. Also exhibits THF-independent aldolase activity toward beta-hydroxyamino acids, producing glycine and aldehydes, via a retro-aldol mechanism. This Rhizobium meliloti (strain 1021) (Ensifer meliloti) protein is Serine hydroxymethyltransferase 1.